The chain runs to 389 residues: Chalcone synthase 9 (389 aa).

Cys164 is an active-site residue.

Belongs to the thiolase-like superfamily. Chalcone/stilbene synthases family.

The catalysed reaction is (E)-4-coumaroyl-CoA + 3 malonyl-CoA + 3 H(+) = 2',4,4',6'-tetrahydroxychalcone + 3 CO2 + 4 CoA. Its pathway is secondary metabolite biosynthesis; flavonoid biosynthesis. The primary product of this enzyme is 4,2',4',6'-tetrahydroxychalcone (also termed naringenin-chalcone or chalcone) which can under specific conditions spontaneously isomerize into naringenin. This chain is Chalcone synthase 9 (CHS9), found in Medicago sativa (Alfalfa).